Consider the following 608-residue polypeptide: Isocitrate dehydrogenase kinase/phosphatase (608 aa).

ATP is bound by residues 328–334 (APGIKGL) and lysine 349. Residue aspartate 384 is part of the active site.

Belongs to the AceK family.

It localises to the cytoplasm. It catalyses the reaction L-seryl-[isocitrate dehydrogenase] + ATP = O-phospho-L-seryl-[isocitrate dehydrogenase] + ADP + H(+). Functionally, bifunctional enzyme which can phosphorylate or dephosphorylate isocitrate dehydrogenase (IDH) on a specific serine residue. This is a regulatory mechanism which enables bacteria to bypass the Krebs cycle via the glyoxylate shunt in response to the source of carbon. When bacteria are grown on glucose, IDH is fully active and unphosphorylated, but when grown on acetate or ethanol, the activity of IDH declines drastically concomitant with its phosphorylation. This is Isocitrate dehydrogenase kinase/phosphatase from Cupriavidus pinatubonensis (strain JMP 134 / LMG 1197) (Cupriavidus necator (strain JMP 134)).